The primary structure comprises 177 residues: Probable DNA-directed RNA polymerase subunit delta (177 aa).

In terms of domain architecture, HTH HARE-type spans Leu14–Trp83. Acidic residues-rich tracts occupy residues Gly117–Asn134 and Glu142–Ser157. The disordered stretch occupies residues Gly117–Lys164.

The protein belongs to the RpoE family. In terms of assembly, RNAP is composed of a core of 2 alpha, a beta and a beta' subunits. The core is associated with a delta subunit and one of several sigma factors.

Its function is as follows. Participates in both the initiation and recycling phases of transcription. In the presence of the delta subunit, RNAP displays an increased specificity of transcription, a decreased affinity for nucleic acids, and an increased efficiency of RNA synthesis because of enhanced recycling. The sequence is that of Probable DNA-directed RNA polymerase subunit delta from Streptococcus suis (strain 98HAH33).